Reading from the N-terminus, the 368-residue chain is Uroporphyrinogen decarboxylase (368 aa).

Substrate is bound by residues 41-45 (RQAGR), aspartate 91, tyrosine 168, serine 223, and histidine 345.

It belongs to the uroporphyrinogen decarboxylase family. In terms of assembly, homodimer.

It is found in the cytoplasm. It catalyses the reaction uroporphyrinogen III + 4 H(+) = coproporphyrinogen III + 4 CO2. Its pathway is porphyrin-containing compound metabolism; protoporphyrin-IX biosynthesis; coproporphyrinogen-III from 5-aminolevulinate: step 4/4. In terms of biological role, catalyzes the decarboxylation of four acetate groups of uroporphyrinogen-III to yield coproporphyrinogen-III. This chain is Uroporphyrinogen decarboxylase, found in Psychrobacter sp. (strain PRwf-1).